The chain runs to 520 residues: Probable alginate O-acetylase AlgI (520 aa).

10 helical membrane-spanning segments follow: residues 7–24, 39–61, 78–100, 115–137, 150–172, 239–261, 311–333, 353–375, 402–424, and 483–505; these read VFLFLFLPVFLGLYYLSG, FYAWWRVDFLLLFAGVTVFNYWI, WLILGVVVDLCVLGYFKYANFGV, FVLTHILLPIGISFYTFESISYI, NLIDFAAFVAIFPHLIAGPVLRF, LYFDFSGYSDMAIGLGLMMGFRF, LFLTMLLGGLWHGANFTYIIWGA, VLNPLKWVITFLLVVIGWVIFRA, ANLTGLQVGTLVLAYLVLAFFGL, and WLSQLPVLATRLALLLLFAASVL. The active site involves H322.

The protein belongs to the membrane-bound acyltransferase family.

The protein resides in the cell inner membrane. Its pathway is glycan biosynthesis; alginate biosynthesis. Its function is as follows. Together with AlgJ and AlgF, forms an inner membrane complex which probably interacts with the alginate polymerization-transport complex and adds acetyl groups at the O-2 and O-3 positions of mannuronate residues. Acetylation of alginate is important for the architecture of biofilms and increases resistance to opsonic killing in the host. In Pseudomonas aeruginosa (strain ATCC 15692 / DSM 22644 / CIP 104116 / JCM 14847 / LMG 12228 / 1C / PRS 101 / PAO1), this protein is Probable alginate O-acetylase AlgI (algI).